The following is a 569-amino-acid chain: Sulfite reductase [NADPH] hemoprotein beta-component (569 aa).

Residues C434, C440, C479, and C483 each coordinate [4Fe-4S] cluster. C483 is a binding site for siroheme.

This sequence belongs to the nitrite and sulfite reductase 4Fe-4S domain family. In terms of assembly, alpha(8)-beta(8). The alpha component is a flavoprotein, the beta component is a hemoprotein. Siroheme is required as a cofactor. The cofactor is [4Fe-4S] cluster.

The catalysed reaction is hydrogen sulfide + 3 NADP(+) + 3 H2O = sulfite + 3 NADPH + 4 H(+). Its pathway is sulfur metabolism; hydrogen sulfide biosynthesis; hydrogen sulfide from sulfite (NADPH route): step 1/1. In terms of biological role, component of the sulfite reductase complex that catalyzes the 6-electron reduction of sulfite to sulfide. This is one of several activities required for the biosynthesis of L-cysteine from sulfate. This is Sulfite reductase [NADPH] hemoprotein beta-component from Staphylococcus saprophyticus subsp. saprophyticus (strain ATCC 15305 / DSM 20229 / NCIMB 8711 / NCTC 7292 / S-41).